Here is a 1669-residue protein sequence, read N- to C-terminus: Collagen alpha-1(IV) chain (1669 aa).

A signal peptide spans 1-27 (MGPRLGVWLLLLLAALLLHEESSRAAA). Positions 28 to 172 (KGGCAGSGCG…LGHIPGTLLK (145 aa)) are cleaved as a propeptide — N-terminal propeptide (7S domain). The tract at residues 50–1445 (ERGLPGLQGV…PPGTPSVDHG (1396 aa)) is disordered. The tract at residues 173–1440 (GERGYPGQPG…PGSMGPPGTP (1268 aa)) is triple-helical region. Over residues 196–214 (VGPPGFTGPPGPPGPPGPP) the composition is skewed to pro residues. A 3-hydroxyproline mark is found at Pro204, Pro207, and Pro210. Composition is skewed to basic and acidic residues over residues 254–263 (TAMRGEKGQK) and 289–298 (PGKDGEKGEK). Gly residues predominate over residues 347 to 356 (GYPGGPGAKG). Low complexity predominate over residues 357–366 (ETGPKGFPGI). Over residues 367–376 (PGQPGPPGFP) the composition is skewed to pro residues. Over residues 396–412 (PGLPGVSLPGPSGRDGL) the composition is skewed to low complexity. Composition is skewed to pro residues over residues 413-424 (PGPPGPPGPPGQ) and 436-448 (PGPP…PGIP). Over residues 485–494 (PGEIGFPGQP) the composition is skewed to low complexity. 2 stretches are compositionally biased toward basic and acidic residues: residues 497-508 (KGDRGLPGRDGL) and 535-545 (FDIRLKGDKGD). A compositionally biased stretch (gly residues) spans 586–595 (GPPGGVGFPG). Pro587 and Pro602 each carry 3-hydroxyproline. Position 603 is a 4-hydroxyproline (Pro603). Pro605 carries the 3-hydroxyproline modification. A 4-hydroxyproline mark is found at Pro606, Pro623, Pro626, Pro629, and Pro632. Position 647 is a 3-hydroxyproline (Pro647). 2 stretches are compositionally biased toward gly residues: residues 758-767 (GNVGGPGIPG) and 797-817 (GVPG…GPPG). Positions 847 to 871 (SQGLPGLTGQSGLPGLPGQQGTPGQ) are enriched in low complexity. The span at 937–955 (SMDKVDMGSMKGEKGDQGE) shows a compositional bias: basic and acidic residues. Residues 1011–1020 (GSAGGMGLPG) are compositionally biased toward gly residues. Composition is skewed to low complexity over residues 1030-1040 (IPGPQGIPGLP), 1101-1114 (SPGS…PGLP), and 1193-1212 (FPGL…QGFM). Pro1214 is subject to 3-hydroxyproline. Positions 1247 to 1258 (PGRPGPMGPPGL) are enriched in pro residues. Residues 1290 to 1299 (GMPGIGGSPG) show a composition bias toward gly residues. Over residues 1413-1428 (FGPPGPRGFPGPPGPD) the composition is skewed to pro residues. The residue at position 1424 (Pro1424) is a 3-hydroxyproline. The Collagen IV NC1 domain occupies 1445–1669 (GFLVTRHSQT…SRCQVCMRRT (225 aa)). Disulfide bonds link Cys1460–Cys1551, Cys1493–Cys1548, Cys1505–Cys1511, Cys1570–Cys1665, Cys1604–Cys1662, and Cys1616–Cys1622. An S-Lysyl-methionine sulfilimine (Met-Lys) (interchain with K-1651) cross-link involves residue Met1533. Lys1651 is covalently cross-linked (S-Lysyl-methionine sulfilimine (Lys-Met) (interchain with M-1533)).

It belongs to the type IV collagen family. In terms of assembly, there are six type IV collagen isoforms, alpha 1(IV)-alpha 6(IV), each of which can form a triple helix structure with 2 other chains to generate type IV collagen network. Interacts with EFEMP2. Lysines at the third position of the tripeptide repeating unit (G-X-Y) are hydroxylated in all cases. The modified lysines can be O-glycosylated. In terms of processing, contains 4-hydroxyproline. Prolines at the third position of the tripeptide repeating unit (G-X-Y) are hydroxylated in some or all of the chains. Post-translationally, contains 3-hydroxyproline. This modification occurs on the first proline residue in the sequence motif Gly-Pro-Hyp, where Hyp is 4-hydroxyproline. Type IV collagens contain numerous cysteine residues which are involved in inter- and intramolecular disulfide bonding. 12 of these, located in the NC1 domain, are conserved in all known type IV collagens. In terms of processing, the trimeric structure of the NC1 domains is stabilized by covalent bonds (sulfilimine cross-links) between Lys and Met residues. These cross-links are important for the mechanical stability of the basement membrane. Sulfilimine cross-link is catalyzed by PXDN. Post-translationally, proteolytic processing produces the C-terminal NC1 peptide, arresten.

It localises to the secreted. The protein resides in the extracellular space. It is found in the extracellular matrix. Its subcellular location is the basement membrane. In terms of biological role, type IV collagen is the major structural component of glomerular basement membranes (GBM), forming a 'chicken-wire' meshwork together with laminins, proteoglycans and entactin/nidogen. Its function is as follows. Arresten, comprising the C-terminal NC1 domain, inhibits angiogenesis and tumor formation. The C-terminal half is found to possess the anti-angiogenic activity. Specifically inhibits endothelial cell proliferation, migration and tube formation. This is Collagen alpha-1(IV) chain from Bos taurus (Bovine).